Here is a 664-residue protein sequence, read N- to C-terminus: MPSRKHLANAIRALSMDGVQKANSGHPGAPMGMADIAEVLWRGHLNHNPSNPEWADRDRFVLSNGHGSMLIYSLLHLSGYELSIDDLKNFRQLHSKTPGHPEYGYAPGIETTTGPLGQGITNAVGMAMAEKALAAQFNKEGHDIVDHFTYVFMGDGCLMEGISHEACSLAGTLGLGKLIAFWDDNGISIDGHVEGWFSDDTPKRFEAYGWHVIPAVDGHNAEAINAAIEAAKADPRPTLICTKTIIGFGSPNKSGSHDCHGAPLGAEEIAAAREFLGWEHPAFEIPADVYAEWDAKAAGAAKEAAWNAKFDAYAAAYPAEAAEFKRRVNGELPAQWEEKANQIIADLQANPANIASRKASQNALEAFGKMLPEFMGGSADLAPSNLTMWSGSKSLEASDFSGNYIHYGVREFGMTAIMNGIALHGGFVPYGATFLMFMEYARNAMRMAALMKVQNIQVYTHDSIGLGEDGPTHQPVEQIASLRLTPNMSTWRPCDQVESAVAWKLAIERKDGPSALIFSRQNLAQQPRSAEQVADIAKGGYILKDSDGKPELILIATGSEVELAVKAAEQLTAEGKKVRVVSMPATDAFDKQDAAYRESVLPSDVTARIAIEAGIADFWYKYVGFDGRIIGMTTFGESAPADQLFEMFGFTVENVVNTAKELLA.

Residue His-26 coordinates substrate. Thiamine diphosphate is bound by residues His-66 and 114 to 116; that span reads GPL. A Mg(2+)-binding site is contributed by Asp-155. Thiamine diphosphate is bound by residues Gly-156 and Asn-185. Residues Asn-185 and Ile-187 each contribute to the Mg(2+) site. Substrate contacts are provided by His-260, Arg-357, and Ser-384. Residue His-260 coordinates thiamine diphosphate. Catalysis depends on Glu-411, which acts as the Proton donor. Residue Phe-437 participates in thiamine diphosphate binding. Substrate is bound by residues His-461, Asp-469, and Arg-520.

It belongs to the transketolase family. Homodimer. Mg(2+) serves as cofactor. Requires Ca(2+) as cofactor. It depends on Mn(2+) as a cofactor. The cofactor is Co(2+). Thiamine diphosphate is required as a cofactor.

The catalysed reaction is D-sedoheptulose 7-phosphate + D-glyceraldehyde 3-phosphate = aldehydo-D-ribose 5-phosphate + D-xylulose 5-phosphate. Its function is as follows. Catalyzes the transfer of a two-carbon ketol group from a ketose donor to an aldose acceptor, via a covalent intermediate with the cofactor thiamine pyrophosphate. This is Transketolase 1 (tkt1) from Vibrio vulnificus (strain YJ016).